The sequence spans 280 residues: Shikimate dehydrogenase (NADP(+)) (280 aa).

Shikimate contacts are provided by residues 20-22 (TLS) and threonine 67. Lysine 71 functions as the Proton acceptor in the catalytic mechanism. Positions 92 and 107 each coordinate shikimate. Residues 131-135 (GAGGA), 154-159 (NRTIDK), and leucine 224 each bind NADP(+). Tyrosine 226 contacts shikimate. Glycine 247 contacts NADP(+).

It belongs to the shikimate dehydrogenase family. In terms of assembly, homodimer.

It carries out the reaction shikimate + NADP(+) = 3-dehydroshikimate + NADPH + H(+). Its pathway is metabolic intermediate biosynthesis; chorismate biosynthesis; chorismate from D-erythrose 4-phosphate and phosphoenolpyruvate: step 4/7. Its function is as follows. Involved in the biosynthesis of the chorismate, which leads to the biosynthesis of aromatic amino acids. Catalyzes the reversible NADPH linked reduction of 3-dehydroshikimate (DHSA) to yield shikimate (SA). The sequence is that of Shikimate dehydrogenase (NADP(+)) from Carboxydothermus hydrogenoformans (strain ATCC BAA-161 / DSM 6008 / Z-2901).